The primary structure comprises 415 residues: uncharacterized protein (415 aa).

[4Fe-4S] cluster-binding residues include cysteine 276 and cysteine 316.

Homodimer. Requires [4Fe-4S] cluster as cofactor.

This is an uncharacterized protein from Methanocaldococcus jannaschii (strain ATCC 43067 / DSM 2661 / JAL-1 / JCM 10045 / NBRC 100440) (Methanococcus jannaschii).